The chain runs to 193 residues: Oligoribonuclease (193 aa).

The region spanning 8 to 171 is the Exonuclease domain; sequence LVWLDLEMTG…EDIRESVAEL (164 aa). Tyrosine 129 is a catalytic residue.

It belongs to the oligoribonuclease family.

It localises to the cytoplasm. Its function is as follows. 3'-to-5' exoribonuclease specific for small oligoribonucleotides. In Alkalilimnicola ehrlichii (strain ATCC BAA-1101 / DSM 17681 / MLHE-1), this protein is Oligoribonuclease.